Reading from the N-terminus, the 512-residue chain is Histidine ammonia-lyase (512 aa).

The segment at residues 145–147 (ASG) is a cross-link (5-imidazolinone (Ala-Gly)). Serine 146 is subject to 2,3-didehydroalanine (Ser).

The protein belongs to the PAL/histidase family. In terms of processing, contains an active site 4-methylidene-imidazol-5-one (MIO), which is formed autocatalytically by cyclization and dehydration of residues Ala-Ser-Gly.

Its subcellular location is the cytoplasm. The catalysed reaction is L-histidine = trans-urocanate + NH4(+). The protein operates within amino-acid degradation; L-histidine degradation into L-glutamate; N-formimidoyl-L-glutamate from L-histidine: step 1/3. The protein is Histidine ammonia-lyase of Pseudomonas fluorescens (strain SBW25).